We begin with the raw amino-acid sequence, 348 residues long: MSDGSRKSGTKSTFHFVAGLGSGVLSAILLQPIDLLKTRVQQSGKHSLRAALAELRSSQQGLLPSLWRGTLPSALRTGFGSAIYFTTLNTIRENAARHLPSLAAAAPTIAAASGIVAPNANQTSSSLPKLSNTGNLLAGAVARSFAGFILMPLTVLKVRYESSFYKYTSLAGAARDIARTEGARGFFAGFGATAIRDAPYAGLYVLFYEKSKQHLSNLFPQPPQPQLSTTTTLEAAAGQDGGGRMSQSRAASINFASGVFSAIICSIISNPFDAVKTRIQLQPKKYRNMVQASRKMLAEEGVRSMMDGLALRMSRKAMSSALAWTVYEELIRRAEGAWTKRGPEEVQL.

Solcar repeat units follow at residues 10-94 (TKST…IREN), 130-214 (LSNT…SKQH), and 249-333 (RAAS…LIRR). 6 helical membrane passes run 16-41 (FVAGLGSGVLSAILLQPIDLLKTRVQ), 69-95 (GTLPSALRTGFGSAIYFTTLNTIRENA), 136-161 (LLAGAVARSFAGFILMPLTVLKVRYE), 189-212 (GFGATAIRDAPYAGLYVLFYEKSK), 253-279 (INFASGVFSAIICSIISNPFDAVKTRI), and 308-326 (GLALRMSRKAMSSALAWTV).

It belongs to the mitochondrial carrier (TC 2.A.29) family. SLC25A38 subfamily.

Its subcellular location is the mitochondrion inner membrane. It carries out the reaction glycine(in) = glycine(out). In terms of biological role, mitochondrial glycine transporter that imports glycine into the mitochondrial matrix. Plays an important role in providing glycine for the first enzymatic step in heme biosynthesis, the condensation of glycine with succinyl-CoA to produce 5-aminolevulinate (ALA) in the mitochondrial matrix. The sequence is that of Mitochondrial glycine transporter (mic-13) from Neurospora crassa (strain ATCC 24698 / 74-OR23-1A / CBS 708.71 / DSM 1257 / FGSC 987).